The following is a 503-amino-acid chain: Diels-Alderase cghA (503 aa).

This sequence belongs to the Diels-Alderase family.

The catalysed reaction is (2S)-3-[(2S)-3,5-dioxo-4-[(2E,4R,6R,8E,10E,12E)-4,6,12-trimethyltetradeca-2,8,10,12-tetraenoyl]pyrrolidin-2-yl]-2-hydroxy-2-methylpropanoate = sch 210972. Its pathway is secondary metabolite biosynthesis. In terms of biological role, diels-Alderase; part of the gene cluster that mediates the biosynthesis of the tetramic acid Sch210972, a potential anti-HIV fungal natural product that contains a decalin core. The PKS module of cghG together with the enoylreductase cghC catalyze the formation of the polyketide unit which is then conjugated to 4-hydroxyl-4-methyl glutamate (HMG) by the condensation domain of the cghG NRPS module. One unique structural feature of Sch210972 is the tetramic acid motif proposed to be derived from the non-proteinogenic amino acid HMG, by a Dieckmann-type condensation catalyzed by the reductase domain of cghG. The aldolase cghB catalyzes the aldol condensation of 2 molecules of pyruvic acid to yield the intermediate 4-hydroxyl-4-methyl-2-oxoglutarate (HMOG), which can then be stereoselectively transaminated by an unidentified enzyme to form HMG. The Diels-Alderase cghA then uses the Dieckmann product released by cghG as substrate and catalyzes the Diels-Alder cycloaddition to form the decalin ring of Sch210972. CghA also suppresses the nonenzymatic formation of the alternative stereoisomer. In Chaetomium globosum (strain ATCC 6205 / CBS 148.51 / DSM 1962 / NBRC 6347 / NRRL 1970) (Soil fungus), this protein is Diels-Alderase cghA.